We begin with the raw amino-acid sequence, 304 residues long: MLRGSASSTSMEKAKGKEWTSTEKSREEDQQASNQPNSIALPGTSAKRTKEKMSIKGSKVLCPKKKAEHTDNPRPQKKIPIPPLPSKLPPVNLIHRDILRAWCQQLKLSSKGQKLDAYKRLCAFAYPNQKDFPSTAKEAKIRKSLQKKLKVEKGETSLQSSETHPPEVALPPVGEPPALENSTALLEGVNTVVVTTSAPEALLASWARISARARTPEAVESPQEASGVRWCVVHGKSLPADTDGWVHLQFHAGQAWVPEKQEGRVSALFLLPASNFPPPHLEDNMLCPKCVHRNKVLIKSLQWE.

The segment covering 1-11 (MLRGSASSTSM) has biased composition (polar residues). 2 disordered regions span residues 1–84 (MLRG…IPPL) and 147–176 (KKLK…VGEP). Positions 12–29 (EKAKGKEWTSTEKSREED) are enriched in basic and acidic residues. The residue at position 215 (Thr-215) is a Phosphothreonine. 2 positions are modified to phosphoserine: Ser-221 and Ser-226.

As to quaternary structure, interacts with DPPA2. Interacts with PCGF1.

The protein localises to the nucleus. Functionally, may be involved in the maintenance of active epigenetic status of target genes. May inhibit differentiation of embryonic cells into a primitive ectoderm lineage. This chain is Developmental pluripotency-associated protein 4 (DPPA4), found in Homo sapiens (Human).